Reading from the N-terminus, the 550-residue chain is MLKNINPTETQAWADLTAHFETAQNFNLADLFSADAQRFDKFSTTFGQDILVDFSKNLVTEETMQKLFSLAEQTELSEAIKAMFSGEKINKTEDRSVLHTALRNRSNTPVIVDGEDVMPAVNAVLEKMKAFTERLISGEWKGYTGKEITDIVNIGIGGSDLGPYMVSEALAPYKTRLNMHFVSNVDGTHIVETLKPLNPETTLFLIASKTFTTQETMTNAHSARDWFLAEAGDQAHVAKHFAALSTNAESVSEFGIDTDNMFEFWDWVGGRYSLWSAIGLSIALAVGFDNFVELLEGAHEVDNHFANTELENNVPVILALIGLWYNNFHGSESESILPYDQYLHRFAAYFQQGNMESNGKCVDRNGNPVDYQTGPIIWGEPGTNGQHAFYQLIHQGTKLIPCDFIAPAISHNQVGDHHQKLMSNFFAQTEALAFGKKEETVRAEFAAAGKTEAEMAELVAFKVFEGNRPTNSILVKKVTPKTLGNLIAMYEHKIFVQGVIWNIFSFDQWGVELGKQLANQILPELADDKAINSHDSSTNGLINAFKAFKA.

E356 serves as the catalytic Proton donor. Active-site residues include H387 and K515.

The protein belongs to the GPI family.

The protein localises to the cytoplasm. It carries out the reaction alpha-D-glucose 6-phosphate = beta-D-fructose 6-phosphate. Its pathway is carbohydrate biosynthesis; gluconeogenesis. The protein operates within carbohydrate degradation; glycolysis; D-glyceraldehyde 3-phosphate and glycerone phosphate from D-glucose: step 2/4. Functionally, catalyzes the reversible isomerization of glucose-6-phosphate to fructose-6-phosphate. This Aliivibrio salmonicida (strain LFI1238) (Vibrio salmonicida (strain LFI1238)) protein is Glucose-6-phosphate isomerase.